A 314-amino-acid polypeptide reads, in one-letter code: Electron transfer flavoprotein subunit alpha (314 aa).

Residue 253–281 (LYVAVGISGAIQHLAGMKDSKVIVAINKD) participates in FAD binding.

Belongs to the ETF alpha-subunit/FixB family. Heterodimer of an alpha and a beta subunit. It depends on FAD as a cofactor.

The electron transfer flavoprotein serves as a specific electron acceptor for other dehydrogenases. It transfers the electrons to the main respiratory chain via ETF-ubiquinone oxidoreductase (ETF dehydrogenase). The chain is Electron transfer flavoprotein subunit alpha (etfA) from Bradyrhizobium diazoefficiens (strain JCM 10833 / BCRC 13528 / IAM 13628 / NBRC 14792 / USDA 110).